The primary structure comprises 295 residues: N-acetylmuramic acid 6-phosphate etherase (295 aa).

In terms of domain architecture, SIS spans 53–216 (TTEQFKQGGR…STITMVGVGK (164 aa)). Glutamate 81 functions as the Proton donor in the catalytic mechanism. The active site involves glutamate 112.

Belongs to the GCKR-like family. MurNAc-6-P etherase subfamily. Homodimer.

It carries out the reaction N-acetyl-D-muramate 6-phosphate + H2O = N-acetyl-D-glucosamine 6-phosphate + (R)-lactate. The protein operates within amino-sugar metabolism; N-acetylmuramate degradation. Functionally, specifically catalyzes the cleavage of the D-lactyl ether substituent of MurNAc 6-phosphate, producing GlcNAc 6-phosphate and D-lactate. The sequence is that of N-acetylmuramic acid 6-phosphate etherase from Staphylococcus saprophyticus subsp. saprophyticus (strain ATCC 15305 / DSM 20229 / NCIMB 8711 / NCTC 7292 / S-41).